Reading from the N-terminus, the 480-residue chain is Aspartyl/glutamyl-tRNA(Asn/Gln) amidotransferase subunit B (480 aa).

It belongs to the GatB/GatE family. GatB subfamily. Heterotrimer of A, B and C subunits.

It carries out the reaction L-glutamyl-tRNA(Gln) + L-glutamine + ATP + H2O = L-glutaminyl-tRNA(Gln) + L-glutamate + ADP + phosphate + H(+). The enzyme catalyses L-aspartyl-tRNA(Asn) + L-glutamine + ATP + H2O = L-asparaginyl-tRNA(Asn) + L-glutamate + ADP + phosphate + 2 H(+). Its function is as follows. Allows the formation of correctly charged Asn-tRNA(Asn) or Gln-tRNA(Gln) through the transamidation of misacylated Asp-tRNA(Asn) or Glu-tRNA(Gln) in organisms which lack either or both of asparaginyl-tRNA or glutaminyl-tRNA synthetases. The reaction takes place in the presence of glutamine and ATP through an activated phospho-Asp-tRNA(Asn) or phospho-Glu-tRNA(Gln). This chain is Aspartyl/glutamyl-tRNA(Asn/Gln) amidotransferase subunit B, found in Streptococcus agalactiae serotype III (strain NEM316).